The primary structure comprises 168 residues: Protein GRE1 (168 aa).

The segment at 1-168 is disordered; it reads MSNLLNKFAD…DDDSGNQGVW (168 aa). 2 stretches are compositionally biased toward basic and acidic residues: residues 8–20 and 27–43; these read FADK…HDER and DQTR…REFR. Composition is skewed to polar residues over residues 56–81 and 120–144; these read NQGN…GNDF and TSGQ…SNIG.

It is found in the cytoplasm. In Saccharomyces cerevisiae (strain ATCC 204508 / S288c) (Baker's yeast), this protein is Protein GRE1 (GRE1).